The following is a 290-amino-acid chain: Ribosomal RNA small subunit methyltransferase H (290 aa).

S-adenosyl-L-methionine-binding positions include 35-37, Asp-54, Phe-81, Asp-97, and Gln-104; that span reads GGH.

Belongs to the methyltransferase superfamily. RsmH family.

It localises to the cytoplasm. The catalysed reaction is cytidine(1402) in 16S rRNA + S-adenosyl-L-methionine = N(4)-methylcytidine(1402) in 16S rRNA + S-adenosyl-L-homocysteine + H(+). In terms of biological role, specifically methylates the N4 position of cytidine in position 1402 (C1402) of 16S rRNA. This Picosynechococcus sp. (strain ATCC 27264 / PCC 7002 / PR-6) (Agmenellum quadruplicatum) protein is Ribosomal RNA small subunit methyltransferase H.